We begin with the raw amino-acid sequence, 142 residues long: Large ribosomal subunit protein uL13 (142 aa).

It belongs to the universal ribosomal protein uL13 family. Part of the 50S ribosomal subunit.

Functionally, this protein is one of the early assembly proteins of the 50S ribosomal subunit, although it is not seen to bind rRNA by itself. It is important during the early stages of 50S assembly. This is Large ribosomal subunit protein uL13 from Methylococcus capsulatus (strain ATCC 33009 / NCIMB 11132 / Bath).